The following is a 284-amino-acid chain: Bifunctional protein FolD (284 aa).

NADP(+) is bound by residues 166–168 (GAS) and Ile-232.

The protein belongs to the tetrahydrofolate dehydrogenase/cyclohydrolase family. In terms of assembly, homodimer.

The catalysed reaction is (6R)-5,10-methylene-5,6,7,8-tetrahydrofolate + NADP(+) = (6R)-5,10-methenyltetrahydrofolate + NADPH. The enzyme catalyses (6R)-5,10-methenyltetrahydrofolate + H2O = (6R)-10-formyltetrahydrofolate + H(+). It participates in one-carbon metabolism; tetrahydrofolate interconversion. Functionally, catalyzes the oxidation of 5,10-methylenetetrahydrofolate to 5,10-methenyltetrahydrofolate and then the hydrolysis of 5,10-methenyltetrahydrofolate to 10-formyltetrahydrofolate. This chain is Bifunctional protein FolD, found in Tolumonas auensis (strain DSM 9187 / NBRC 110442 / TA 4).